Consider the following 583-residue polypeptide: 2-succinyl-5-enolpyruvyl-6-hydroxy-3-cyclohexene-1-carboxylate synthase (583 aa).

This sequence belongs to the TPP enzyme family. MenD subfamily. In terms of assembly, homodimer. Requires Mg(2+) as cofactor. The cofactor is Mn(2+). Thiamine diphosphate serves as cofactor.

The catalysed reaction is isochorismate + 2-oxoglutarate + H(+) = 5-enolpyruvoyl-6-hydroxy-2-succinyl-cyclohex-3-ene-1-carboxylate + CO2. It participates in quinol/quinone metabolism; 1,4-dihydroxy-2-naphthoate biosynthesis; 1,4-dihydroxy-2-naphthoate from chorismate: step 2/7. It functions in the pathway quinol/quinone metabolism; menaquinone biosynthesis. In terms of biological role, catalyzes the thiamine diphosphate-dependent decarboxylation of 2-oxoglutarate and the subsequent addition of the resulting succinic semialdehyde-thiamine pyrophosphate anion to isochorismate to yield 2-succinyl-5-enolpyruvyl-6-hydroxy-3-cyclohexene-1-carboxylate (SEPHCHC). This chain is 2-succinyl-5-enolpyruvyl-6-hydroxy-3-cyclohexene-1-carboxylate synthase, found in Chlorobaculum parvum (strain DSM 263 / NCIMB 8327) (Chlorobium vibrioforme subsp. thiosulfatophilum).